The sequence spans 262 residues: Carboxy-S-adenosyl-L-methionine synthase (262 aa).

S-adenosyl-L-methionine-binding positions include Tyr50, 84–86 (GCS), 137–138 (DI), Asn152, and Arg219.

This sequence belongs to the class I-like SAM-binding methyltransferase superfamily. Cx-SAM synthase family. In terms of assembly, homodimer.

It catalyses the reaction prephenate + S-adenosyl-L-methionine = carboxy-S-adenosyl-L-methionine + 3-phenylpyruvate + H2O. Functionally, catalyzes the conversion of S-adenosyl-L-methionine (SAM) to carboxy-S-adenosyl-L-methionine (Cx-SAM). The sequence is that of Carboxy-S-adenosyl-L-methionine synthase from Psychrobacter arcticus (strain DSM 17307 / VKM B-2377 / 273-4).